The sequence spans 355 residues: Zinc transporter ZIP13 homolog (355 aa).

Asn4 is a glycosylation site (N-linked (GlcNAc...) asparagine). A run of 3 helical transmembrane segments spans residues 37–57 (VFSLLGSVVIGLSGIFPLIII), 79–99 (VLLSFAVGGLLGDVFLHLLPE), and 118–138 (LWVLSGILIFTIVEKIFSGYA). Asn218 is a glycosylation site (N-linked (GlcNAc...) asparagine). 2 consecutive transmembrane segments (helical) span residues 273 to 293 (LLTAGAGLLGALVAIGGSGVT) and 301 to 321 (SWIMPFTAGGFLHIALVTVLP).

The protein belongs to the ZIP transporter (TC 2.A.5) family. KE4/Catsup subfamily.

The protein localises to the basolateral cell membrane. Its subcellular location is the golgi apparatus membrane. Functionally, involved in zinc transport and homeostasis. The polypeptide is Zinc transporter ZIP13 homolog (Zip99C) (Drosophila melanogaster (Fruit fly)).